Here is a 171-residue protein sequence, read N- to C-terminus: Translationally-controlled tumor protein homolog (171 aa).

The TCTP domain occupies methionine 1–phenylalanine 171.

Belongs to the TCTP family.

The protein resides in the cytoplasm. Involved in calcium binding and microtubule stabilization. The protein is Translationally-controlled tumor protein homolog of Anopheles gambiae (African malaria mosquito).